We begin with the raw amino-acid sequence, 440 residues long: Ribosomal protein uS12 methylthiotransferase RimO (440 aa).

The 117-residue stretch at 1–117 (MKVHLTSLGC…VIEAVAGKES (117 aa)) folds into the MTTase N-terminal domain. 6 residues coordinate [4Fe-4S] cluster: Cys10, Cys46, Cys80, Cys155, Cys159, and Cys162. The Radical SAM core domain occupies 141–371 (CATPHTVYVK…MTAQIDISSR (231 aa)). The TRAM domain maps to 374–440 (AKRVGSREPV…SAYDLTGEAQ (67 aa)).

It belongs to the methylthiotransferase family. RimO subfamily. The cofactor is [4Fe-4S] cluster.

It localises to the cytoplasm. It carries out the reaction L-aspartate(89)-[ribosomal protein uS12]-hydrogen + (sulfur carrier)-SH + AH2 + 2 S-adenosyl-L-methionine = 3-methylsulfanyl-L-aspartate(89)-[ribosomal protein uS12]-hydrogen + (sulfur carrier)-H + 5'-deoxyadenosine + L-methionine + A + S-adenosyl-L-homocysteine + 2 H(+). Its function is as follows. Catalyzes the methylthiolation of an aspartic acid residue of ribosomal protein uS12. The polypeptide is Ribosomal protein uS12 methylthiotransferase RimO (Desulfosudis oleivorans (strain DSM 6200 / JCM 39069 / Hxd3) (Desulfococcus oleovorans)).